The chain runs to 198 residues: Potassium-transporting ATPase KdpC subunit (198 aa).

The helical transmembrane segment at 8–28 (ILAVLVFTILCGIIYPVSTTV) threads the bilayer.

The protein belongs to the KdpC family. The system is composed of three essential subunits: KdpA, KdpB and KdpC.

The protein localises to the cell membrane. Its function is as follows. Part of the high-affinity ATP-driven potassium transport (or Kdp) system, which catalyzes the hydrolysis of ATP coupled with the electrogenic transport of potassium into the cytoplasm. This subunit acts as a catalytic chaperone that increases the ATP-binding affinity of the ATP-hydrolyzing subunit KdpB by the formation of a transient KdpB/KdpC/ATP ternary complex. The polypeptide is Potassium-transporting ATPase KdpC subunit (Clostridium perfringens (strain ATCC 13124 / DSM 756 / JCM 1290 / NCIMB 6125 / NCTC 8237 / Type A)).